The following is a 254-amino-acid chain: Methyl-CpG-binding domain-containing protein 11 (254 aa).

An MBD domain is found at 4 to 74; that stretch reads EEEVVSVELP…AEFDWTTSGT (71 aa). Residues 56–254 are disordered; sequence KSHPGNPAIA…EKTAEGEATG (199 aa). Composition is skewed to basic and acidic residues over residues 80–97, 107–130, 151–162, and 178–254; these read RISEKTKATPSPDKEPPK, SKKDAEGEKSEGGGEENSHVKDTE, ETERVNDAKENI, and ESMK…EATG. Position 116 is a phosphoserine (serine 116).

In terms of tissue distribution, expressed in leaves (around hydathodes), buds, flowers (carpels and pollen grains), stems (around nodes), siliques, mature seeds and roots.

Its subcellular location is the nucleus. Functionally, transcriptional regulator that binds DNA independently of its methylation status. Required during plant organogenesis and development. The sequence is that of Methyl-CpG-binding domain-containing protein 11 (MBD11) from Arabidopsis thaliana (Mouse-ear cress).